Reading from the N-terminus, the 91-residue chain is Kazal-type trypsin inhibitor (91 aa).

Residues 1 to 22 (MRHIGVFVGVLALALVLLVVEA) form the signal peptide. The Kazal-like domain occupies 25–78 (DAERGVCACPRIYMPVCGSNLKTYNNDCLLRCEINSDLGRANNLRKIADQACDN). Cystine bridges form between C31/C56, C33/C52, and C41/C76. N78 carries an N-linked (GlcNAc...) asparagine glycan.

As to quaternary structure, interacts with human PLG (plasmin). Female salivary gland. Female gut at 3 and 24 hours after blood feeding. Female carcass. Male tissues. Not detected in ovary and fat body at 3 and 24 hours after blood feeding.

It is found in the secreted. Its function is as follows. Anticoagulant protein that decreases host thrombin (F2) activity via an uncompetitive inhibition mechanism. Inhibits amidolytic activity of host plasmin (PLG). Inhibits amidolytic activity of host trypsin. Inhibits trypsin-like endogenous activity from gut of female mosquitoes 24 hours after feeding and weakly affects enzyme activity from gut 3 hours after feeding, suggesting a possible role as an inhibitor of endogenous proteases. (Microbial infection) Limits host plasmin-mediated enhancement of dengue virus type 2 infection in mosquito midgut. This Aedes aegypti (Yellowfever mosquito) protein is Kazal-type trypsin inhibitor.